The sequence spans 450 residues: Signal recognition particle protein (450 aa).

GTP-binding positions include 107–114, 190–194, and 248–251; these read GLQGVGKT, DTAGR, and TKTD.

The protein belongs to the GTP-binding SRP family. SRP54 subfamily. In terms of assembly, part of the signal recognition particle protein translocation system, which is composed of SRP and FtsY. SRP is a ribonucleoprotein composed of Ffh and a 4.5S RNA molecule.

The protein resides in the cytoplasm. The catalysed reaction is GTP + H2O = GDP + phosphate + H(+). Its function is as follows. Involved in targeting and insertion of nascent membrane proteins into the cytoplasmic membrane. Binds to the hydrophobic signal sequence of the ribosome-nascent chain (RNC) as it emerges from the ribosomes. The SRP-RNC complex is then targeted to the cytoplasmic membrane where it interacts with the SRP receptor FtsY. Interaction with FtsY leads to the transfer of the RNC complex to the Sec translocase for insertion into the membrane, the hydrolysis of GTP by both Ffh and FtsY, and the dissociation of the SRP-FtsY complex into the individual components. This is Signal recognition particle protein from Buchnera aphidicola subsp. Schizaphis graminum (strain Sg).